We begin with the raw amino-acid sequence, 103 residues long: CLAVATA3/ESR (CLE)-related protein 22 (103 aa).

The first 34 residues, 1 to 34 (MGNYYSRRKSRKHITTVALIILLLLLFLFLYAKA), serve as a signal peptide directing secretion. The interval 37–103 (SSPNIHHHST…FTGPNPLHNR (67 aa)) is disordered. The segment covering 41 to 50 (IHHHSTHGSL) has biased composition (basic residues). Residues 66–76 (NAASSRGSKYT) show a composition bias toward polar residues. Position 97 is a hydroxyproline (P97). O-linked (Ara...) hydroxyproline glycosylation occurs at P97.

It belongs to the CLV3/ESR signal peptide family. In terms of processing, the O-glycosylation (arabinosylation) of the hydroxyproline Pro-97 enhances binding affinity of the CLE22p peptide for its receptor. As to expression, mostly expressed in stems and apex, and, to a lower extent, in seedlings, leaves, flowers and siliques.

The protein localises to the secreted. It localises to the extracellular space. In terms of biological role, extracellular signal peptide that regulates cell fate. Represses root apical meristem maintenance. The polypeptide is CLAVATA3/ESR (CLE)-related protein 22 (Arabidopsis thaliana (Mouse-ear cress)).